The following is an 807-amino-acid chain: Glycerol-3-phosphate acyltransferase (807 aa).

The short motif at 305–310 (CHRSHM) is the HXXXXD motif element.

This sequence belongs to the GPAT/DAPAT family.

It is found in the cell inner membrane. The enzyme catalyses sn-glycerol 3-phosphate + an acyl-CoA = a 1-acyl-sn-glycero-3-phosphate + CoA. Its pathway is phospholipid metabolism; CDP-diacylglycerol biosynthesis; CDP-diacylglycerol from sn-glycerol 3-phosphate: step 1/3. The protein is Glycerol-3-phosphate acyltransferase of Klebsiella pneumoniae subsp. pneumoniae (strain ATCC 700721 / MGH 78578).